The primary structure comprises 270 residues: 3-phenylpropionate-dihydrodiol/cinnamic acid-dihydrodiol dehydrogenase (270 aa).

An NAD(+)-binding site is contributed by 10-34 (FITGGGSGLGLALVERFIEEGAQVA). A substrate-binding site is contributed by Ser-143. The Proton acceptor role is filled by Tyr-156.

This sequence belongs to the short-chain dehydrogenases/reductases (SDR) family.

It catalyses the reaction 3-(cis-5,6-dihydroxycyclohexa-1,3-dien-1-yl)propanoate + NAD(+) = 3-(2,3-dihydroxyphenyl)propanoate + NADH + H(+). The enzyme catalyses (2E)-3-(cis-5,6-dihydroxycyclohexa-1,3-dien-1-yl)prop-2-enoate + NAD(+) = (2E)-3-(2,3-dihydroxyphenyl)prop-2-enoate + NADH + H(+). It functions in the pathway aromatic compound metabolism; 3-phenylpropanoate degradation. Functionally, converts 3-phenylpropionate-dihydrodiol (PP-dihydrodiol) and cinnamic acid-dihydrodiol (CI-dihydrodiol) into 3-(2,3-dihydroxylphenyl)propanoic acid (DHPP) and 2,3-dihydroxicinnamic acid (DHCI), respectively. The polypeptide is 3-phenylpropionate-dihydrodiol/cinnamic acid-dihydrodiol dehydrogenase (Escherichia coli O157:H7).